The following is a 495-amino-acid chain: Putative aldehyde dehydrogenase AldA (495 aa).

Position 212 to 218 (212 to 218 (GKGSESG)) interacts with NAD(+). Residues E256 and C290 contribute to the active site.

This sequence belongs to the aldehyde dehydrogenase family.

It catalyses the reaction an aldehyde + NAD(+) + H2O = a carboxylate + NADH + 2 H(+). In Staphylococcus aureus (strain MSSA476), this protein is Putative aldehyde dehydrogenase AldA (aldA).